The following is a 222-amino-acid chain: Exosome complex component Rrp4 (222 aa).

In terms of domain architecture, S1 motif spans 63 to 131 (NDSVIGKVVD…EVKKVKLGLH (69 aa)). The KH domain maps to 139–200 (EGGTLAYITP…EIVKRALEMI (62 aa)).

The protein belongs to the RRP4 family. As to quaternary structure, component of the archaeal exosome complex. Forms a trimer of Rrp4 and/or Csl4 subunits. The trimer associates with a hexameric ring-like arrangement composed of 3 Rrp41-Rrp42 heterodimers.

Its subcellular location is the cytoplasm. In terms of biological role, non-catalytic component of the exosome, which is a complex involved in RNA degradation. Increases the RNA binding and the efficiency of RNA degradation. Confers strong poly(A) specificity to the exosome. The protein is Exosome complex component Rrp4 of Methanothermus fervidus (strain ATCC 43054 / DSM 2088 / JCM 10308 / V24 S).